Consider the following 205-residue polypeptide: Small ribosomal subunit protein uS4 (205 aa).

Over residues 1–16 the composition is skewed to basic and acidic residues; that stretch reads MSKRESSKYKIDRRMG. Residues 1 to 46 are disordered; that stretch reads MSKRESSKYKIDRRMGENIWGRPKSPVNRREYGPGQHGQRRKGKLS. The S4 RNA-binding domain occupies 94-157; it reads SRLDAIVYRA…KQLVTVLEAV (64 aa).

It belongs to the universal ribosomal protein uS4 family. As to quaternary structure, part of the 30S ribosomal subunit. Contacts protein S5. The interaction surface between S4 and S5 is involved in control of translational fidelity.

One of the primary rRNA binding proteins, it binds directly to 16S rRNA where it nucleates assembly of the body of the 30S subunit. In terms of biological role, with S5 and S12 plays an important role in translational accuracy. This is Small ribosomal subunit protein uS4 from Rhizobium etli (strain ATCC 51251 / DSM 11541 / JCM 21823 / NBRC 15573 / CFN 42).